The following is a 382-amino-acid chain: Dual-specificity RNA methyltransferase RlmN (382 aa).

The active-site Proton acceptor is E96. The region spanning 102 to 340 is the Radical SAM core domain; sequence QNGRGTLCVS…VTVRTTRGDD (239 aa). C109 and C345 are oxidised to a cystine. The [4Fe-4S] cluster site is built by C116, C120, and C123. S-adenosyl-L-methionine is bound by residues 170–171, S202, 224–226, and N302; these read GE and SLH. C345 acts as the S-methylcysteine intermediate in catalysis.

Belongs to the radical SAM superfamily. RlmN family. [4Fe-4S] cluster serves as cofactor.

The protein localises to the cytoplasm. The enzyme catalyses adenosine(2503) in 23S rRNA + 2 reduced [2Fe-2S]-[ferredoxin] + 2 S-adenosyl-L-methionine = 2-methyladenosine(2503) in 23S rRNA + 5'-deoxyadenosine + L-methionine + 2 oxidized [2Fe-2S]-[ferredoxin] + S-adenosyl-L-homocysteine. It catalyses the reaction adenosine(37) in tRNA + 2 reduced [2Fe-2S]-[ferredoxin] + 2 S-adenosyl-L-methionine = 2-methyladenosine(37) in tRNA + 5'-deoxyadenosine + L-methionine + 2 oxidized [2Fe-2S]-[ferredoxin] + S-adenosyl-L-homocysteine. Specifically methylates position 2 of adenine 2503 in 23S rRNA and position 2 of adenine 37 in tRNAs. m2A2503 modification seems to play a crucial role in the proofreading step occurring at the peptidyl transferase center and thus would serve to optimize ribosomal fidelity. The protein is Dual-specificity RNA methyltransferase RlmN of Ectopseudomonas mendocina (strain ymp) (Pseudomonas mendocina).